A 226-amino-acid polypeptide reads, in one-letter code: ATP synthase F(0) complex subunit a (226 aa).

A run of 6 helical transmembrane segments spans residues 6–26, 68–88, 97–117, 138–158, 164–184, and 189–209; these read FASF…IVLF, WALM…LGLL, QLSM…ITGF, IPML…ALAV, ITAG…LMSI, and ALIT…VAMI.

This sequence belongs to the ATPase A chain family. Component of the ATP synthase complex composed at least of ATP5F1A/subunit alpha, ATP5F1B/subunit beta, ATP5MC1/subunit c (homooctomer), MT-ATP6/subunit a, MT-ATP8/subunit 8, ATP5ME/subunit e, ATP5MF/subunit f, ATP5MG/subunit g, ATP5MK/subunit k, ATP5MJ/subunit j, ATP5F1C/subunit gamma, ATP5F1D/subunit delta, ATP5F1E/subunit epsilon, ATP5PF/subunit F6, ATP5PB/subunit b, ATP5PD/subunit d, ATP5PO/subunit OSCP. ATP synthase complex consists of a soluble F(1) head domain (subunits alpha(3) and beta(3)) - the catalytic core - and a membrane F(0) domain - the membrane proton channel (subunits c, a, 8, e, f, g, k and j). These two domains are linked by a central stalk (subunits gamma, delta, and epsilon) rotating inside the F1 region and a stationary peripheral stalk (subunits F6, b, d, and OSCP). Interacts with DNAJC30; interaction is direct.

Its subcellular location is the mitochondrion inner membrane. The enzyme catalyses H(+)(in) = H(+)(out). Functionally, subunit a, of the mitochondrial membrane ATP synthase complex (F(1)F(0) ATP synthase or Complex V) that produces ATP from ADP in the presence of a proton gradient across the membrane which is generated by electron transport complexes of the respiratory chain. ATP synthase complex consist of a soluble F(1) head domain - the catalytic core - and a membrane F(1) domain - the membrane proton channel. These two domains are linked by a central stalk rotating inside the F(1) region and a stationary peripheral stalk. During catalysis, ATP synthesis in the catalytic domain of F(1) is coupled via a rotary mechanism of the central stalk subunits to proton translocation. With the subunit c (ATP5MC1), forms the proton-conducting channel in the F(0) domain, that contains two crucial half-channels (inlet and outlet) that facilitate proton movement from the mitochondrial intermembrane space (IMS) into the matrix. Protons are taken up via the inlet half-channel and released through the outlet half-channel, following a Grotthuss mechanism. The sequence is that of ATP synthase F(0) complex subunit a from Bos indicus (Zebu).